Reading from the N-terminus, the 142-residue chain is Nucleoside diphosphate kinase (142 aa).

The ATP site is built by Lys11, Phe59, Arg87, Thr93, Arg104, and Asn114. The active-site Pros-phosphohistidine intermediate is the His117.

The protein belongs to the NDK family. Homotetramer. Requires Mg(2+) as cofactor.

Its subcellular location is the cytoplasm. The catalysed reaction is a 2'-deoxyribonucleoside 5'-diphosphate + ATP = a 2'-deoxyribonucleoside 5'-triphosphate + ADP. It catalyses the reaction a ribonucleoside 5'-diphosphate + ATP = a ribonucleoside 5'-triphosphate + ADP. In terms of biological role, major role in the synthesis of nucleoside triphosphates other than ATP. The ATP gamma phosphate is transferred to the NDP beta phosphate via a ping-pong mechanism, using a phosphorylated active-site intermediate. This Aeromonas hydrophila subsp. hydrophila (strain ATCC 7966 / DSM 30187 / BCRC 13018 / CCUG 14551 / JCM 1027 / KCTC 2358 / NCIMB 9240 / NCTC 8049) protein is Nucleoside diphosphate kinase.